Reading from the N-terminus, the 329-residue chain is Ribonucleoside-diphosphate reductase subunit beta (329 aa).

Residues D66, E97, and H101 each coordinate Fe cation. Residue Y105 is part of the active site. Residues E164, E198, and H201 each coordinate Fe cation.

Belongs to the ribonucleoside diphosphate reductase small chain family. In terms of assembly, tetramer of two alpha and two beta subunits. It depends on Fe cation as a cofactor.

The catalysed reaction is a 2'-deoxyribonucleoside 5'-diphosphate + [thioredoxin]-disulfide + H2O = a ribonucleoside 5'-diphosphate + [thioredoxin]-dithiol. Provides the precursors necessary for DNA synthesis. Catalyzes the biosynthesis of deoxyribonucleotides from the corresponding ribonucleotides. The polypeptide is Ribonucleoside-diphosphate reductase subunit beta (nrdF) (Bacillus subtilis (strain 168)).